A 466-amino-acid polypeptide reads, in one-letter code: Soluble pyridine nucleotide transhydrogenase (466 aa).

36 to 45 provides a ligand contact to FAD; sequence ERYQNVGGGC.

The protein belongs to the class-I pyridine nucleotide-disulfide oxidoreductase family. The cofactor is FAD.

Its subcellular location is the cytoplasm. It carries out the reaction NAD(+) + NADPH = NADH + NADP(+). In terms of biological role, conversion of NADPH, generated by peripheral catabolic pathways, to NADH, which can enter the respiratory chain for energy generation. This chain is Soluble pyridine nucleotide transhydrogenase, found in Escherichia fergusonii (strain ATCC 35469 / DSM 13698 / CCUG 18766 / IAM 14443 / JCM 21226 / LMG 7866 / NBRC 102419 / NCTC 12128 / CDC 0568-73).